Here is a 311-residue protein sequence, read N- to C-terminus: 4-diphosphocytidyl-2-C-methyl-D-erythritol kinase (311 aa).

K13 is an active-site residue. 114–124 (PVAGGMAGGSA) provides a ligand contact to ATP. D156 is an active-site residue.

This sequence belongs to the GHMP kinase family. IspE subfamily.

It catalyses the reaction 4-CDP-2-C-methyl-D-erythritol + ATP = 4-CDP-2-C-methyl-D-erythritol 2-phosphate + ADP + H(+). Its pathway is isoprenoid biosynthesis; isopentenyl diphosphate biosynthesis via DXP pathway; isopentenyl diphosphate from 1-deoxy-D-xylulose 5-phosphate: step 3/6. In terms of biological role, catalyzes the phosphorylation of the position 2 hydroxy group of 4-diphosphocytidyl-2C-methyl-D-erythritol. This Corynebacterium diphtheriae (strain ATCC 700971 / NCTC 13129 / Biotype gravis) protein is 4-diphosphocytidyl-2-C-methyl-D-erythritol kinase.